The sequence spans 2156 residues: MAM and LDL-receptor class A domain-containing protein 1 (2156 aa).

Positions 1-31 are cleaved as a signal peptide; it reads MLFFLDRMLAFPMNETFCCLWIACVFNSTLA. The Vesicular portion of the chain corresponds to 32 to 2076; sequence QQGTESFQCD…FTYAQNNTWT (2045 aa). The LDL-receptor class A 1 domain maps to 33-68; sequence QGTESFQCDNGVSLPPDSICDFTDQCGDSSDERHCL. 2 disulfides stabilise this stretch: cysteine 40/cysteine 58 and cysteine 52/cysteine 67. MAM domains follow at residues 71–229 and 268–427; these read ERCD…GCLP and QACG…ACGQ. The LDL-receptor class A 2 domain occupies 433-471; sequence LCSADEFPCTSGQCIAKESVCDSRQDCSDESDEDPATCS. 3 disulfides stabilise this stretch: cysteine 434/cysteine 446, cysteine 441/cysteine 459, and cysteine 453/cysteine 470. MAM domains follow at residues 474–637 and 652–816; these read LTCD…ECEI and SKCD…NCTL. The N-linked (GlcNAc...) asparagine glycan is linked to asparagine 813. In terms of domain architecture, LDL-receptor class A 3 spans 822 to 860; sequence SCEGLDHFWCRHTRACIEKLRLCDLVDDCGDRTDEVNCA. 3 cysteine pairs are disulfide-bonded: cysteine 823-cysteine 837, cysteine 831-cysteine 850, and cysteine 844-cysteine 859. The MAM 5 domain maps to 863 to 1024; it reads LQCNFETGIC…DDLSFMDCTL (162 aa). Asparagine 1049 carries N-linked (GlcNAc...) asparagine glycosylation. The 38-residue stretch at 1049-1086 folds into the LDL-receptor class A 4 domain; it reads NCTDNEFICRSDGHCIEKMQKCDFKYDCPDKSDEASCV. Cystine bridges form between cysteine 1050–cysteine 1063, cysteine 1057–cysteine 1076, and cysteine 1070–cysteine 1085. Residues 1088 to 1256 enclose the MAM 6 domain; sequence EVCSFEKRSL…DDISFQDCSP (169 aa). Asparagine 1199 carries N-linked (GlcNAc...) asparagine glycosylation. Residues 1263–1301 form the LDL-receptor class A 5 domain; sequence KCTDHEFMCANKHCIAKDKLCDFVNDCADNSDETTFICR. Cystine bridges form between cysteine 1264–cysteine 1276, cysteine 1271–cysteine 1289, and cysteine 1283–cysteine 1300. An MAM 7 domain is found at 1305–1465; the sequence is GRCDFEFDLC…DIVLTENCLS (161 aa). N-linked (GlcNAc...) asparagine glycosylation is present at asparagine 1414. One can recognise an LDL-receptor class A 6 domain in the interval 1482–1518; it reads FCPLGYRECHNGKCYRLEQSCNFVDNCGDNTDENECG. Cystine bridges form between cysteine 1483–cysteine 1495, cysteine 1490–cysteine 1508, and cysteine 1502–cysteine 1517. The region spanning 1519 to 1676 is the MAM 8 domain; that stretch reads SSCTFEKGWC…DDIEFKNCTT (158 aa). The 38-residue stretch at 1683 to 1720 folds into the LDL-receptor class A 7 domain; the sequence is LCPEITDFLCRDKKCIASHLLCDYKPDCSDRSDEAHCA. 3 cysteine pairs are disulfide-bonded: cysteine 1684-cysteine 1697, cysteine 1692-cysteine 1710, and cysteine 1704-cysteine 1719. One can recognise an MAM 9 domain in the interval 1727-1892; that stretch reads GSCNFETSSG…DISFTPECVT (166 aa). 3 consecutive LDL-receptor class A domains span residues 1902–1939, 1946–1982, and 1985–2023; these read PCEADQFSCIYTLQCVPLSGKCDGHEDCIDGSDEMDCP, LCSNMEFPCSTDECIPSLLLCDGVPDCHFNEDELICS, and SCSNGALVCASSNSCIPAHQRCDGFADCMDFQLDESSCS. Disulfide bonds link cysteine 1903–cysteine 1916, cysteine 1910–cysteine 1929, cysteine 1923–cysteine 1938, cysteine 1947–cysteine 1959, cysteine 1954–cysteine 1972, cysteine 1966–cysteine 1981, cysteine 1986–cysteine 1999, cysteine 1993–cysteine 2012, cysteine 2006–cysteine 2022, cysteine 2025–cysteine 2036, cysteine 2030–cysteine 2045, and cysteine 2047–cysteine 2056. The 34-residue stretch at 2024 to 2057 folds into the EGF-like domain; sequence ECPLNYCRNGGTCVVEKNGPMCRCRQGWKGNRCH. A helical transmembrane segment spans residues 2077-2097; it reads LLGIGLAFLMTHITVAVLCFL. Residues 2098–2156 are Cytoplasmic-facing; the sequence is ANRKVPIRKTEGSGNCAFVNPVYGNWSNPEKTESSVYSFSNPLYGTTSGSLETLSHHLK.

Interacts with FGF19. As to expression, strongly expressed in the small intestine.

The protein localises to the cytoplasmic vesicle membrane. Functionally, enhances production and/or transport of FGF19 and thus has a role in regulation of bile acid synthesis. The chain is MAM and LDL-receptor class A domain-containing protein 1 from Homo sapiens (Human).